Here is a 339-residue protein sequence, read N- to C-terminus: NADH-quinone oxidoreductase subunit H (339 aa).

9 consecutive transmembrane segments (helical) span residues 9–29, 50–70, 82–102, 115–135, 161–181, 187–207, 235–255, 275–295, and 311–331; these read IFPLIIIALKVVAITIPLILC, PNVVGPFGLLQPIADAVKLLF, ILFILAPMITFILSLIGWAVI, VGVLYILAISSLSVYGIIIAG, MGLVIITVLLTTGTLNLSEII, IPWWIDLMLLPMGVVFFISVL, MGFALFFLGEYANMILVSAMT, IPGFFWFVFKVGFLLFCFLWI, and GWKVFLPLTLFWVVLVSSVLV.

This sequence belongs to the complex I subunit 1 family. In terms of assembly, NDH-1 is composed of 14 different subunits. Subunits NuoA, H, J, K, L, M, N constitute the membrane sector of the complex.

The protein localises to the cell inner membrane. The catalysed reaction is a quinone + NADH + 5 H(+)(in) = a quinol + NAD(+) + 4 H(+)(out). NDH-1 shuttles electrons from NADH, via FMN and iron-sulfur (Fe-S) centers, to quinones in the respiratory chain. The immediate electron acceptor for the enzyme in this species is believed to be ubiquinone. Couples the redox reaction to proton translocation (for every two electrons transferred, four hydrogen ions are translocated across the cytoplasmic membrane), and thus conserves the redox energy in a proton gradient. This subunit may bind ubiquinone. The polypeptide is NADH-quinone oxidoreductase subunit H (Rickettsia rickettsii (strain Iowa)).